Reading from the N-terminus, the 284-residue chain is RNase adapter protein RapZ (284 aa).

8–15 (GRSGSGKS) is an ATP binding site. 56–59 (DVRN) is a binding site for GTP. The segment at 266-284 (RSRGKNVQSRHRTLEKRKT) is RNA-binding.

It belongs to the RapZ-like family. RapZ subfamily. In terms of assembly, homotrimer.

Functionally, modulates the synthesis of GlmS, by affecting the processing and stability of the regulatory small RNA GlmZ. When glucosamine-6-phosphate (GlcN6P) concentrations are high in the cell, RapZ binds GlmZ and targets it to cleavage by RNase E. Consequently, GlmZ is inactivated and unable to activate GlmS synthesis. Under low GlcN6P concentrations, RapZ is sequestered and inactivated by an other regulatory small RNA, GlmY, preventing GlmZ degradation and leading to synthesis of GlmS. This is RNase adapter protein RapZ from Salmonella typhimurium (strain LT2 / SGSC1412 / ATCC 700720).